A 359-amino-acid polypeptide reads, in one-letter code: Type-1 angiotensin II receptor (359 aa).

The Extracellular segment spans residues 1–25; that stretch reads MVPNYSTEETVKRIHVDCPVSGRHS. An N-linked (GlcNAc...) asparagine glycan is attached at Asn4. Asp17 is an angiotensin II binding site. Disulfide bonds link Cys18-Cys274 and Cys101-Cys180. Residues 26–55 traverse the membrane as a helical segment; sequence YIYIMVPTVYSIIFIIGIFGNSLVVIVIYC. The Cytoplasmic segment spans residues 56–61; it reads YMKLKT. Residues 62–89 form a helical membrane-spanning segment; the sequence is VASIFLLNLALADLCFLITLPLWAAYTA. The Extracellular segment spans residues 90–98; the sequence is MEYQWPFGN. Residues 99 to 125 form a helical membrane-spanning segment; that stretch reads CLCKLASAGISFNLYASVFLLTCLSID. Residues 126 to 141 lie on the Cytoplasmic side of the membrane; that stretch reads RYLAIVHPVKSRIRRT. A helical membrane pass occupies residues 142-165; sequence MFVARVTCIVIWLLAGVASLPVII. Residues 166–190 are Extracellular-facing; it reads HRNIFFAENLNMTVCGFRYDNNNTT. An angiotensin II-binding site is contributed by Arg167. Residue Asn176 is glycosylated (N-linked (GlcNAc...) asparagine). Phe182 and Tyr184 together coordinate angiotensin II. Residues Asn187 and Asn188 are each glycosylated (N-linked (GlcNAc...) asparagine). The chain crosses the membrane as a helical span at residues 191 to 216; the sequence is LRVGLGLSKNLLGFLIPFLIILTSYT. Residue Lys199 coordinates angiotensin II. The Cytoplasmic segment spans residues 217 to 239; the sequence is LIWKTLKKAYQIQRNKTRNDDIF. The helical transmembrane segment at 240 to 268 threads the bilayer; sequence KMIVAIVFFFFFSWIPHQVFTFLDVLIQL. Topologically, residues 269–278 are extracellular; it reads HVITDCKITD. A helical transmembrane segment spans residues 279–304; the sequence is IVDTAMPFTICIAYFNNCLNPFFYVF. Residues 305 to 359 lie on the Cytoplasmic side of the membrane; it reads FGKNFKKYFLQLIKYIPPNVSTHPSLTTKMSSLSYRPPENIRLPTKKTAGSFDAE.

This sequence belongs to the G-protein coupled receptor 1 family. C-terminal Ser or Thr residues may be phosphorylated.

It localises to the cell membrane. Its function is as follows. Receptor for angiotensin II, a vasoconstricting peptide, which acts as a key regulator of blood pressure and sodium retention by the kidney. The activated receptor in turn couples to G-alpha proteins G(q) (GNAQ, GNA11, GNA14 or GNA15) and thus activates phospholipase C and increases the cytosolic Ca(2+) concentrations, which in turn triggers cellular responses such as stimulation of protein kinase C. The chain is Type-1 angiotensin II receptor (AGTR1) from Gallus gallus (Chicken).